We begin with the raw amino-acid sequence, 526 residues long: Rho guanine nucleotide exchange factor 3 (526 aa).

Positions Glu20–Lys40 are disordered. 2 positions are modified to phosphoserine: Ser47 and Ser70. Residues Lys122–Lys304 enclose the DH domain. The PH domain maps to Ile291–Glu449. The segment at Glu464 to Val526 is disordered. Over residues Ser466–Arg475 the composition is skewed to polar residues.

As to quaternary structure, interacts with RHOA and RHOB. As to expression, widely expressed. Highest levels are found in adult brain and skeletal muscle. Lower levels are found in heart and kidney.

The protein localises to the cytoplasm. Functionally, acts as a guanine nucleotide exchange factor (GEF) for RhoA and RhoB GTPases. The protein is Rho guanine nucleotide exchange factor 3 (ARHGEF3) of Homo sapiens (Human).